A 258-amino-acid polypeptide reads, in one-letter code: Short-chain dehydrogenase/reductase olcF (258 aa).

Positions 12, 58, and 120 each coordinate NADP(+). Ser138 serves as the catalytic Proton donor. The NADP(+) site is built by Tyr152, Lys156, and Val185. Tyr152 acts as the Proton acceptor in catalysis. The Lowers pKa of active site Tyr role is filled by Lys156.

This sequence belongs to the short-chain dehydrogenases/reductases (SDR) family.

Its pathway is secondary metabolite biosynthesis; terpenoid biosynthesis. Short-chain dehydrogenase/reductase; part of the gene cluster that mediates the biosynthesis of 15-deoxyoxalicine B. The first step of the pathway is the synthesis of nicotinyl-CoA from nicotinic acid by the nicotinic acid-CoA ligase olcI. Nicotinyl-CoA is then a substrate of polyketide synthase olcA to produce 4-hydroxy-6-(3-pyridinyl)-2H-pyran-2-one (HPPO) which is further prenylated by the polyprenyl transferase olcH to yield geranylgeranyl-HPPO. Geranylgeranyl pyrophosphate is provided by the cluster-specific geranylgeranyl pyrophosphate synthase olcC. The FAD-dependent monooxygenase olcE catalyzes the epoxidation of geranylgeranyl-HPPO and the terpene cyclase olcD catalyzes the cyclization of the terpenoid component, resulting in the formation of the tricyclic terpene moiety seen in predecaturin E. The cytochrome P450 monooxygenase then catalyzes the allylic oxidation of predecaturin E, which is followed by spirocylization with concomitant loss of one molecule of water to form decaturin E. Decaturin E is the substrate of the cytochrome P450 monooxygenase olcJ which hydroxylates it at the C-29 position to form decaturin F. The short-chain dehydrogenase/reductase olcF may catalyze the oxidation of decaturin F to generate the 29-hydroxyl-27-one intermediate, and subsequent hemiacetal formation probably leads to the formation of decaturin C. The dioxygenase olcK may be a peroxisomal enzyme that catalyzes the hydroxylation of decaturin C into decaturin A once decaturin C is shuttled into the peroxisome by the MFS transporter olcL. Finally the cytochrome P450 monooxygenase olcB catalyzes the oxidative rearrangement to yield 15-deoxyoxalicine B. In the absence of olcJ, decaturin E may be shunted to a pathway in which it is oxidized to a ketone, possibly by olcF, to form decaturin D, which undergoes further allylic oxidation to yield decaturin G. Moreover, in the absence of oclK or oclL, oclB can convert decaturin C into 15-deoxyoxalicine A. This Penicillium canescens protein is Short-chain dehydrogenase/reductase olcF.